A 372-amino-acid polypeptide reads, in one-letter code: MREILKNVRRLVVKIGSSSLTHPETGKINLAAMERFVRECADLKNAGFEVIIVSSGAIAAGMGRLALPEKPKNLPEKQACAAVGQGVLMHLYEKFFSEYQVIAAQVLLTGEDLAVRKRFLNAKHTFSALLNYGVVPVVNENDTVAVEEIRFGDNDTLSARVAVLVEADLLVLLSDIDGLYTADPRKNSNARFLPEVLEINEEIEQLAGGSGTAVGTGGMETKIEAAKIAVNAGIPMVIARADYGNLRRILRGEEVGTFFYPKKKKQWKKQWLLSGARVQGSIIVDLGAEEALCSGGKSLLPSGVLGVEGEFPTGAIVAVKNLKGRVIAKGLTNYAAQDILKIKGLHSWEIADVLGHKDYDEIIHRDNLVLVD.

K14 lines the ATP pocket. Residues S55, D142, and N154 each coordinate substrate. Residues 174-175 (SD) and 216-222 (TGGMETK) each bind ATP. Residues 279 to 357 (QGSIIVDLGA…WEIADVLGHK (79 aa)) enclose the PUA domain.

This sequence belongs to the glutamate 5-kinase family.

The protein localises to the cytoplasm. The catalysed reaction is L-glutamate + ATP = L-glutamyl 5-phosphate + ADP. It participates in amino-acid biosynthesis; L-proline biosynthesis; L-glutamate 5-semialdehyde from L-glutamate: step 1/2. Its function is as follows. Catalyzes the transfer of a phosphate group to glutamate to form L-glutamate 5-phosphate. In Carboxydothermus hydrogenoformans (strain ATCC BAA-161 / DSM 6008 / Z-2901), this protein is Glutamate 5-kinase.